Here is a 490-residue protein sequence, read N- to C-terminus: Cobyric acid synthase (490 aa).

The GATase cobBQ-type domain maps to 251–444 (GLTIAVIHLP…LHGIFANDAF (194 aa)). Cysteine 329 (nucleophile) is an active-site residue. Histidine 436 is a catalytic residue.

This sequence belongs to the CobB/CobQ family. CobQ subfamily.

The protein operates within cofactor biosynthesis; adenosylcobalamin biosynthesis. Functionally, catalyzes amidations at positions B, D, E, and G on adenosylcobyrinic A,C-diamide. NH(2) groups are provided by glutamine, and one molecule of ATP is hydrogenolyzed for each amidation. The chain is Cobyric acid synthase from Roseiflexus castenholzii (strain DSM 13941 / HLO8).